A 252-amino-acid polypeptide reads, in one-letter code: MIQIKSLSVGARLLPLSFELKQGQVTHVIGPNGSGKSTLLEAISGVGDGYKGDIKLDGQDLSELSLQDLSLHRAYLCQSARPAFNLEVFQYLALSLPSSSHGLDIEINAALDEISQMLDISDKLHRSIQTLSGGEWQRVRLAGMCLQIWPTLNPYAKLLILDEPAAPLDIAQEALLYKLIERVAEKGIAVIMANHDLNRTLRHADQVLLLEKGVLQTSGSAEQVLVPEQLESVFNTQVKSISVDNQTYLLFG.

The region spanning 2–237 is the ABC transporter domain; that stretch reads IQIKSLSVGA…EQLESVFNTQ (236 aa). 30-37 is an ATP binding site; sequence GPNGSGKS.

This sequence belongs to the ABC transporter superfamily. Vitamin B12 importer (TC 3.A.1.13.1) family. The complex is composed of two ATP-binding proteins (BtuD), two transmembrane proteins (BtuC) and a solute-binding protein (BtuF).

It localises to the cell inner membrane. It catalyses the reaction an R-cob(III)alamin(out) + ATP + H2O = an R-cob(III)alamin(in) + ADP + phosphate + H(+). In terms of biological role, part of the ABC transporter complex BtuCDF involved in vitamin B12 import. Responsible for energy coupling to the transport system. The sequence is that of Vitamin B12 import ATP-binding protein BtuD from Vibrio atlanticus (strain LGP32) (Vibrio splendidus (strain Mel32)).